The sequence spans 339 residues: Heat-inducible transcription repressor HrcA (339 aa).

It belongs to the HrcA family.

Negative regulator of class I heat shock genes (grpE-dnaK-dnaJ and groELS operons). Prevents heat-shock induction of these operons. In Paraburkholderia xenovorans (strain LB400), this protein is Heat-inducible transcription repressor HrcA.